Reading from the N-terminus, the 287-residue chain is MPLLKLVFLGTGGAVPRSDRTLPAIYLEDWLGHRFLLDAGEGAQYRLLQIGVSPASLTAVAITHQHEDHTLGLPGLVITSRFLGGRTAVLAPRSMHKALEALGVEVMDSYGGDRLRVSCVEVCHTVDACGWLFQWDVGYKLDLSKAAGLPRWALTSLIRGSPVEVGGRLIKPEDVAEPGHKRLRRLLYTGDTAPCPEMWRKVGEVDVLIHEATFADDVEPQKAHEEGHSTVADAVEAAKALNAGVLILTHVSSRYPDKRRHRELAASVKPPPHVYVPEDFDTVLVRL.

Residues His-64, His-66, Asp-68, His-69, His-124, Asp-191, and His-250 each coordinate Zn(2+). Residue Asp-68 is the Proton acceptor of the active site.

The protein belongs to the RNase Z family. As to quaternary structure, homodimer. Requires Zn(2+) as cofactor.

It carries out the reaction Endonucleolytic cleavage of RNA, removing extra 3' nucleotides from tRNA precursor, generating 3' termini of tRNAs. A 3'-hydroxy group is left at the tRNA terminus and a 5'-phosphoryl group is left at the trailer molecule.. Its function is as follows. Zinc phosphodiesterase, which displays some tRNA 3'-processing endonuclease activity. Probably involved in tRNA maturation, by removing a 3'-trailer from precursor tRNA. In Pyrobaculum neutrophilum (strain DSM 2338 / JCM 9278 / NBRC 100436 / V24Sta) (Thermoproteus neutrophilus), this protein is Ribonuclease Z.